The following is a 123-amino-acid chain: Large ribosomal subunit protein uL29 (123 aa).

The protein belongs to the universal ribosomal protein uL29 family.

This Theileria parva (East coast fever infection agent) protein is Large ribosomal subunit protein uL29 (RPL35).